The following is a 75-amino-acid chain: Acyl carrier protein (75 aa).

One can recognise a Carrier domain in the interval 1–75 (MIFEKVRDII…DVVEYLSNLE (75 aa)). An O-(pantetheine 4'-phosphoryl)serine modification is found at S35.

The protein belongs to the acyl carrier protein (ACP) family. Post-translationally, 4'-phosphopantetheine is transferred from CoA to a specific serine of apo-ACP by AcpS. This modification is essential for activity because fatty acids are bound in thioester linkage to the sulfhydryl of the prosthetic group.

The protein localises to the cytoplasm. It participates in lipid metabolism; fatty acid biosynthesis. Carrier of the growing fatty acid chain in fatty acid biosynthesis. This chain is Acyl carrier protein, found in Thermoanaerobacter pseudethanolicus (strain ATCC 33223 / 39E) (Clostridium thermohydrosulfuricum).